The following is a 293-amino-acid chain: Ribonuclease HIII (293 aa).

Positions 78–293 constitute an RNase H type-2 domain; that stretch reads LPLIGTDEVG…TEKAKKRLER (216 aa). Asp84, Glu85, and Asp187 together coordinate a divalent metal cation.

It belongs to the RNase HII family. RnhC subfamily. Mn(2+) is required as a cofactor. It depends on Mg(2+) as a cofactor.

It is found in the cytoplasm. The catalysed reaction is Endonucleolytic cleavage to 5'-phosphomonoester.. Its function is as follows. Endonuclease that specifically degrades the RNA of RNA-DNA hybrids. This chain is Ribonuclease HIII, found in Streptococcus pneumoniae (strain 70585).